We begin with the raw amino-acid sequence, 547 residues long: Glucose-6-phosphate isomerase (547 aa).

Residue E351 is the Proton donor of the active site. Residues H382 and K509 contribute to the active site.

It belongs to the GPI family.

It is found in the cytoplasm. The catalysed reaction is alpha-D-glucose 6-phosphate = beta-D-fructose 6-phosphate. The protein operates within carbohydrate biosynthesis; gluconeogenesis. Its pathway is carbohydrate degradation; glycolysis; D-glyceraldehyde 3-phosphate and glycerone phosphate from D-glucose: step 2/4. Functionally, catalyzes the reversible isomerization of glucose-6-phosphate to fructose-6-phosphate. The sequence is that of Glucose-6-phosphate isomerase from Coxiella burnetii (strain Dugway 5J108-111).